The following is a 187-amino-acid chain: MLEILKESLLTCPMVKREKDGVVYNYFINPLTDGIPEVTAELLRDVTAAMMVSLDLKNVDKIVVSEAMGIHIGTALTLATGIPFVVIRKREYRLPGEVVIGQETGYSKGTLYMNCVHKGDRVVIIDDVISTGGTIKGILPALKIAGAELVDILFVVNRGSPDIGIPYKTLVTIDVDENGVKIIDSAF.

It belongs to the purine/pyrimidine phosphoribosyltransferase family. Archaeal HPRT subfamily. As to quaternary structure, homodimer.

It is found in the cytoplasm. The catalysed reaction is IMP + diphosphate = hypoxanthine + 5-phospho-alpha-D-ribose 1-diphosphate. It catalyses the reaction GMP + diphosphate = guanine + 5-phospho-alpha-D-ribose 1-diphosphate. It participates in purine metabolism; IMP biosynthesis via salvage pathway; IMP from hypoxanthine: step 1/1. Catalyzes a salvage reaction resulting in the formation of IMP that is energically less costly than de novo synthesis. The chain is Hypoxanthine/guanine phosphoribosyltransferase from Methanocorpusculum labreanum (strain ATCC 43576 / DSM 4855 / Z).